A 215-amino-acid polypeptide reads, in one-letter code: Large ribosomal subunit protein uL4c (215 aa).

A compositionally biased stretch (polar residues) spans 48–57 (SQRQGTISTK). Residues 48 to 85 (SQRQGTISTKTRSEVRGGGRKPWRQKGTGRARAGSSRS) are disordered. Over residues 65 to 76 (GGRKPWRQKGTG) the composition is skewed to basic residues.

Belongs to the universal ribosomal protein uL4 family. As to quaternary structure, part of the 50S ribosomal subunit.

The protein resides in the plastid. Its subcellular location is the chloroplast. Functionally, probably binds the 23S rRNA. The chain is Large ribosomal subunit protein uL4c (rpl4) from Trieres chinensis (Marine centric diatom).